Reading from the N-terminus, the 270-residue chain is Regulatory protein RecX (270 aa).

Belongs to the RecX family.

It is found in the cytoplasm. Modulates RecA activity. The polypeptide is Regulatory protein RecX (Bacillus cereus (strain AH187)).